The chain runs to 282 residues: NADPH-dependent 7-cyano-7-deazaguanine reductase (282 aa).

Substrate is bound at residue 88-90 (IES). Residue 90–91 (SK) participates in NADPH binding. The Thioimide intermediate role is filled by Cys190. The active-site Proton donor is the Asp197. 229–230 (HE) is a binding site for substrate. 258–259 (RG) contacts NADPH.

This sequence belongs to the GTP cyclohydrolase I family. QueF type 2 subfamily. As to quaternary structure, homodimer.

Its subcellular location is the cytoplasm. It catalyses the reaction 7-aminomethyl-7-carbaguanine + 2 NADP(+) = 7-cyano-7-deazaguanine + 2 NADPH + 3 H(+). It participates in tRNA modification; tRNA-queuosine biosynthesis. In terms of biological role, catalyzes the NADPH-dependent reduction of 7-cyano-7-deazaguanine (preQ0) to 7-aminomethyl-7-deazaguanine (preQ1). The polypeptide is NADPH-dependent 7-cyano-7-deazaguanine reductase (Shigella dysenteriae serotype 1 (strain Sd197)).